We begin with the raw amino-acid sequence, 231 residues long: Type 3 secretion system stator protein (231 aa).

The core secretion machinery of the T3SS is composed of approximately 20 different proteins, including cytoplasmic components, a base, an export apparatus and a needle. This subunit is part of the cytosolic complex. Interacts directly with Spa47/SctN (T3SS ATPase) and Spa33/SctQ (the major sorting platform component). Homodimer in solution.

Its subcellular location is the cytoplasm. Its function is as follows. Component of the type III secretion system (T3SS), also called injectisome, which is used to inject bacterial effector proteins into eukaryotic host cells. Acts as a regulator of the Spa47/SctN ATPase activity. It down-regulates the ATPase activity of the oligomeric Spa47/SctN, while it up-regulates the activity of the monomeric form. Important for translocation of MxiH/SctF, the major needle component. This chain is Type 3 secretion system stator protein, found in Shigella flexneri.